We begin with the raw amino-acid sequence, 345 residues long: uncharacterized protein (345 aa).

In terms of domain architecture, CNNM transmembrane spans 1-198 (MDVLSAVLLA…LSEGLLDHEE (198 aa)). Transmembrane regions (helical) follow at residues 3–23 (VLSA…FVGA) and 95–115 (VPPA…HVLL). CBS domains follow at residues 217–280 (AVPL…PQTV) and 285–342 (VVRP…MRDG). Residues 312 to 332 (LALVTADNGSVVGMVALEDVV) traverse the membrane as a helical segment.

It belongs to the TerC family.

The protein resides in the cell membrane. This is an uncharacterized protein from Mycobacterium tuberculosis (strain CDC 1551 / Oshkosh).